The following is a 190-amino-acid chain: Peptidyl-prolyl cis-trans isomerase A (190 aa).

An N-terminal signal peptide occupies residues 1–24 (MLKSTLAAVAAVFALSALSPAALA). One can recognise a PPIase cyclophilin-type domain in the interval 27–188 (GDPHVLLTTS…KPVVILSAKV (162 aa)).

It belongs to the cyclophilin-type PPIase family.

It localises to the periplasm. It catalyses the reaction [protein]-peptidylproline (omega=180) = [protein]-peptidylproline (omega=0). Functionally, PPIases accelerate the folding of proteins. It catalyzes the cis-trans isomerization of proline imidic peptide bonds in oligopeptides. This Salmonella typhimurium (strain LT2 / SGSC1412 / ATCC 700720) protein is Peptidyl-prolyl cis-trans isomerase A (ppiA).